We begin with the raw amino-acid sequence, 566 residues long: Urease subunit alpha 2 (566 aa).

Residues 128–566 enclose the Urease domain; sequence GGVDTHIHFI…LPMAQRYFLF (439 aa). His-133, His-135, and Lys-216 together coordinate Ni(2+). An N6-carboxylysine modification is found at Lys-216. His-218 is a binding site for substrate. Ni(2+) contacts are provided by His-245 and His-271. Catalysis depends on His-319, which acts as the Proton donor. Asp-359 contributes to the Ni(2+) binding site.

Belongs to the metallo-dependent hydrolases superfamily. Urease alpha subunit family. As to quaternary structure, may form a heterohexamer of 3 UreC (alpha) and 3 UreAB (gamma/beta) subunits. May also form a heterotrimer of UreA (gamma), UreB (beta) and UreC (alpha) subunits. Three heterotrimers associate to form the active enzyme. Ni cation serves as cofactor. In terms of processing, carboxylation allows a single lysine to coordinate two nickel ions.

The protein resides in the cytoplasm. It catalyses the reaction urea + 2 H2O + H(+) = hydrogencarbonate + 2 NH4(+). It participates in nitrogen metabolism; urea degradation; CO(2) and NH(3) from urea (urease route): step 1/1. The chain is Urease subunit alpha 2 from Pseudomonas syringae pv. syringae (strain B728a).